A 222-amino-acid chain; its full sequence is Vesicle-associated membrane protein 724 (222 aa).

Over 1-197 (MGQESFIYSF…LWYQNMKIKL (197 aa)) the chain is Cytoplasmic. In terms of domain architecture, Longin spans 10–115 (FVARGTMILA…SLNKEFGPVM (106 aa)). Residues 131-191 (KLIKVKAQVS…TQVRRKLWYQ (61 aa)) form the v-SNARE coiled-coil homology domain. The helical; Anchor for type IV membrane protein transmembrane segment at 198 to 218 (VVLGILLLLVLIIWISVCHGF) threads the bilayer. Topologically, residues 219-222 (NCTD) are vesicular.

This sequence belongs to the synaptobrevin family. Expressed in flowers, leaves, stems and roots.

It is found in the cell membrane. The protein resides in the early endosome membrane. Involved in the targeting and/or fusion of transport vesicles to their target membrane. The polypeptide is Vesicle-associated membrane protein 724 (Arabidopsis thaliana (Mouse-ear cress)).